Reading from the N-terminus, the 396-residue chain is ATP synthase subunit beta, chloroplastic (396 aa).

Position 74–81 (74–81 (GGAGVGKT)) interacts with ATP.

Belongs to the ATPase alpha/beta chains family. In terms of assembly, F-type ATPases have 2 components, CF(1) - the catalytic core - and CF(0) - the membrane proton channel. CF(1) has five subunits: alpha(3), beta(3), gamma(1), delta(1), epsilon(1). CF(0) has four main subunits: a(1), b(1), b'(1) and c(9-12).

It is found in the plastid. The protein resides in the chloroplast thylakoid membrane. The catalysed reaction is ATP + H2O + 4 H(+)(in) = ADP + phosphate + 5 H(+)(out). In terms of biological role, produces ATP from ADP in the presence of a proton gradient across the membrane. The catalytic sites are hosted primarily by the beta subunits. The sequence is that of ATP synthase subunit beta, chloroplastic from Adiantum raddianum (Maidenhair fern).